The primary structure comprises 232 residues: Lipoprotein-releasing system ATP-binding protein LolD (232 aa).

In terms of domain architecture, ABC transporter spans 11–232; that stretch reads IEVTDLQRAF…LHDGRLIEEY (222 aa). 47–54 serves as a coordination point for ATP; it reads GPSGAGKS.

The protein belongs to the ABC transporter superfamily. Lipoprotein translocase (TC 3.A.1.125) family. As to quaternary structure, the complex is composed of two ATP-binding proteins (LolD) and two transmembrane proteins (LolC and LolE).

The protein localises to the cell inner membrane. Part of the ABC transporter complex LolCDE involved in the translocation of mature outer membrane-directed lipoproteins, from the inner membrane to the periplasmic chaperone, LolA. Responsible for the formation of the LolA-lipoprotein complex in an ATP-dependent manner. This chain is Lipoprotein-releasing system ATP-binding protein LolD, found in Zymomonas mobilis subsp. mobilis (strain ATCC 31821 / ZM4 / CP4).